Reading from the N-terminus, the 509-residue chain is tRNA-2-methylthio-N(6)-dimethylallyladenosine synthase (509 aa).

Over residues 1-15 the composition is skewed to polar residues; sequence MNEQQRLASQQVNSS. Residues 1-26 are disordered; the sequence is MNEQQRLASQQVNSSTKKEEKDYSKY. The span at 16–25 shows a compositional bias: basic and acidic residues; that stretch reads TKKEEKDYSK. The region spanning 66 to 184 is the MTTase N-terminal domain; that stretch reads RKFYIRTYGC…LPYILKDAMF (119 aa). Positions 75, 111, 145, 221, 225, and 228 each coordinate [4Fe-4S] cluster. The Radical SAM core domain occupies 207-437; the sequence is RRGDIKAWVN…NALVNKLAIE (231 aa). The TRAM domain occupies 440 to 503; it reads DRYKGQIVEV…TWSLNGELVE (64 aa).

It belongs to the methylthiotransferase family. MiaB subfamily. As to quaternary structure, monomer. The cofactor is [4Fe-4S] cluster.

It localises to the cytoplasm. The catalysed reaction is N(6)-dimethylallyladenosine(37) in tRNA + (sulfur carrier)-SH + AH2 + 2 S-adenosyl-L-methionine = 2-methylsulfanyl-N(6)-dimethylallyladenosine(37) in tRNA + (sulfur carrier)-H + 5'-deoxyadenosine + L-methionine + A + S-adenosyl-L-homocysteine + 2 H(+). In terms of biological role, catalyzes the methylthiolation of N6-(dimethylallyl)adenosine (i(6)A), leading to the formation of 2-methylthio-N6-(dimethylallyl)adenosine (ms(2)i(6)A) at position 37 in tRNAs that read codons beginning with uridine. The chain is tRNA-2-methylthio-N(6)-dimethylallyladenosine synthase from Bacillus thuringiensis (strain Al Hakam).